Here is a 78-residue protein sequence, read N- to C-terminus: UPF0235 protein AF_2072 (78 aa).

Belongs to the UPF0235 family.

The protein is UPF0235 protein AF_2072 of Archaeoglobus fulgidus (strain ATCC 49558 / DSM 4304 / JCM 9628 / NBRC 100126 / VC-16).